The sequence spans 519 residues: bZIP transcription factor 30 (519 aa).

Disordered stretches follow at residues 1-30, 45-83, 108-202, 222-295, and 315-339; these read MGGGGDTTDTNMMQRVNSSSGTSSSSIPKH, FRHPFTGAPPPPIPPISPYSQIPATLQPRHSRSMSQPSS, TGAG…RKPE, VLNS…TGRH, and SSLKLPPSSSAKVSPTNSGEGNSSA. Residues 51 to 61 are compositionally biased toward pro residues; that stretch reads GAPPPPIPPIS. Positions 149 to 173 are enriched in polar residues; sequence SDVTFGFSSMMSQNQKSPPLSSLER. The span at 187-202 shows a compositional bias: basic and acidic residues; it reads VKKEPREGFYKGRKPE. 2 stretches are compositionally biased toward low complexity: residues 244-268 and 317-329; these read SRGSGTKKTNGGSSSDSEGDSSASG and LKLPPSSSAKVSP. Polar residues predominate over residues 330–339; it reads TNSGEGNSSA. The segment at 372–393 is basic motif; that stretch reads KRVKRILANRVSAARSKERKTR. A coiled-coil region spans residues 386–460; that stretch reads RSKERKTRYM…SEKLNEEVQR (75 aa). The tract at residues 398–433 is leucine-zipper; that stretch reads LEHKVQTLQTEATTLSAQLTHLQRDSMGLTNQNSEL. Residues 465 to 519 are disordered; the sequence is IGEPNRRQSGSSSSESKMSLNPEMFQQLSISQLQHQQMQHSNQCSTMKAKHTSND. 2 stretches are compositionally biased toward low complexity: residues 473 to 483 and 490 to 509; these read SGSSSSESKMS and QQLSISQLQHQQMQHSNQCS.

In terms of assembly, interacts with WUS, HEC1, KNAT1, KNAT2, HAT1, BEL1, and NGA1. In terms of tissue distribution, expressed in inflorescence meristem, floral organ primordia, gynoecia, ovules and carpel margin meristem.

The protein resides in the nucleus. Its function is as follows. Transcription factor that acts as a repressor of reproductive development, meristem size and plant growth. Acts as a transcriptional repressor in inflorescence tissues. Interacts with well known regulators of meristem and gynoecium development such as WUS, HEC1, KNAT1, KNAT2, HAT1, BEL1 and NGA1. Acts as a positive regulator of JAG and OFP1 expression in developing gynoecia. This chain is bZIP transcription factor 30, found in Arabidopsis thaliana (Mouse-ear cress).